Consider the following 88-residue polypeptide: MVKNSFISVIPQEEKNKGSVEFQVFSFTNKIRKLTSHLELHRKDYSSQIGLRRILGKRQRLLAYLSKKNRVRYKELIDQLGIREPKTR.

It belongs to the universal ribosomal protein uS15 family. As to quaternary structure, part of the 30S ribosomal subunit.

Its subcellular location is the plastid. It localises to the chloroplast. The protein is Small ribosomal subunit protein uS15c (rps15) of Calycanthus floridus var. glaucus (Eastern sweetshrub).